The following is a 411-amino-acid chain: Translation initiation factor 2 subunit gamma (411 aa).

Residues 9–203 (QAEVNIGMVG…AIQDFIPTPK (195 aa)) enclose the tr-type G domain. A G1 region spans residues 18–25 (GHVDHGKT). Mg(2+) is bound by residues Asp-21, Thr-25, Gly-46, and Ser-48. Position 21–26 (21–26 (DHGKTS)) interacts with GTP. The tract at residues 46-50 (GISIR) is G2. Residues Cys-61, Cys-64, Cys-73, and Cys-76 each contribute to the Zn(2+) site. Residues 90–93 (DSPG) form a G3 region. Residues 146 to 149 (NKID) and 181 to 183 (SAH) contribute to the GTP site. Residues 146-149 (NKID) form a G4 region. A G5 region spans residues 181–183 (SAH).

Belongs to the TRAFAC class translation factor GTPase superfamily. Classic translation factor GTPase family. EIF2G subfamily. As to quaternary structure, heterotrimer composed of an alpha, a beta and a gamma chain. It depends on Mg(2+) as a cofactor.

The catalysed reaction is GTP + H2O = GDP + phosphate + H(+). EIF-2 functions in the early steps of protein synthesis by forming a ternary complex with GTP and initiator tRNA. In Methanocaldococcus jannaschii (strain ATCC 43067 / DSM 2661 / JAL-1 / JCM 10045 / NBRC 100440) (Methanococcus jannaschii), this protein is Translation initiation factor 2 subunit gamma.